We begin with the raw amino-acid sequence, 487 residues long: GDP-Man:Man(3)GlcNAc(2)-PP-Dol alpha-1,2-mannosyltransferase (487 aa).

Residues 1–16 lie on the Lumenal side of the membrane; the sequence is MAGILCLCGMMRLLTA. Residues 17-37 form a helical membrane-spanning segment; that stretch reads LFIPVLIASIGLCLVLVLLFI. Residues 38-231 lie on the Cytoplasmic side of the membrane; that stretch reads CTRLWIQRKK…SNNPVLSRLK (194 aa). Positions 232 to 252 form an intramembrane region, helical; sequence LIYYYLFAVIYGWVGSCSDVI. The Cytoplasmic portion of the chain corresponds to 253–394; that stretch reads MVNSTWTFAH…IGLHTMWNEH (142 aa). Residues 395–415 constitute an intramembrane region (helical); that stretch reads FGIGIVECMAAGTIILAHNSG. Residues 416 to 487 lie on the Cytoplasmic side of the membrane; sequence GPKLDIVVPY…FLASSEPLFM (72 aa).

The protein belongs to the glycosyltransferase group 1 family. Glycosyltransferase 4 subfamily.

Its subcellular location is the endoplasmic reticulum membrane. It catalyses the reaction an alpha-D-Man-(1-&gt;3)-[alpha-D-Man-(1-&gt;6)]-beta-D-Man-(1-&gt;4)-beta-D-GlcNAc-(1-&gt;4)-alpha-D-GlcNAc-diphospho-di-trans,poly-cis-dolichol + 2 GDP-alpha-D-mannose = an alpha-D-Man-(1-&gt;2)-alpha-D-Man-(1-&gt;2)-alpha-D-Man-(1-&gt;3)-[alpha-D-Man-(1-&gt;6)]-beta-D-Man-(1-&gt;4)-beta-D-GlcNAc-(1-&gt;4)-alpha-D-GlcNAc-diphospho-di-trans,poly-cis-dolichol + 2 GDP + 2 H(+). Its pathway is protein modification; protein glycosylation. Functionally, GDP-Man:Man(3)GlcNAc(2)-PP-Dol alpha-1,2-mannosyltransferase that operates in the biosynthetic pathway of dolichol-linked oligosaccharides, the glycan precursors employed in protein asparagine (N)-glycosylation. The assembly of dolichol-linked oligosaccharides begins on the cytosolic side of the endoplasmic reticulum membrane and finishes in its lumen. The sequential addition of sugars to dolichol pyrophosphate produces dolichol-linked oligosaccharides containing fourteen sugars, including two GlcNAcs, nine mannoses and three glucoses. Once assembled, the oligosaccharide is transferred from the lipid to nascent proteins by oligosaccharyltransferases. Catalyzes, on the cytoplasmic face of the endoplasmic reticulum, the addition of the fourth and fifth mannose residues to the dolichol-linked oligosaccharide chain, to produce Man(5)GlcNAc(2)-PP-dolichol core oligosaccharide. Man(5)GlcNAc(2)-PP-dolichol is a substrate for ALG3, the following enzyme in the biosynthetic pathway. This Xenopus tropicalis (Western clawed frog) protein is GDP-Man:Man(3)GlcNAc(2)-PP-Dol alpha-1,2-mannosyltransferase (alg11).